We begin with the raw amino-acid sequence, 472 residues long: DEAD-box ATP-dependent RNA helicase 58, chloroplastic (472 aa).

The transit peptide at 1 to 54 directs the protein to the chloroplast; sequence MASQLLNVPHLAFFPKISYASVFSTLKPSFFHSTSTRRALKSSPSSRIINLQAV. The Q motif motif lies at 76 to 104; that stretch reads RQICQGFVPEHILHRMEEIGFVFPTDIQR. The region spanning 107–286 is the Helicase ATP-binding domain; sequence LPTLFTGRDC…DCIQQKWTKR (180 aa). 120 to 127 contributes to the ATP binding site; the sequence is AQTGSGKT. A DEAD box motif is present at residues 231-234; that stretch reads DEVD. The Helicase C-terminal domain maps to 314–472; sequence NKHQVLLALL…LMFSCEEMML (159 aa).

This sequence belongs to the DEAD box helicase family.

The protein localises to the plastid. It is found in the chloroplast. It carries out the reaction ATP + H2O = ADP + phosphate + H(+). In Arabidopsis thaliana (Mouse-ear cress), this protein is DEAD-box ATP-dependent RNA helicase 58, chloroplastic (RH58).